A 424-amino-acid polypeptide reads, in one-letter code: Isovaleryl-CoA dehydrogenase, mitochondrial (424 aa).

The N-terminal 30 residues, 1 to 30 (MATAVRLLGRRVSSWRLRPLPSPLAVPQRA), are a transit peptide targeting the mitochondrion. An N6-acetyllysine; alternate mark is found at K56, K65, and K76. Residues K56, K65, and K76 each carry the N6-succinyllysine; alternate modification. Residues 163–172 (LAMSEPNAGS) and 196–198 (WIT) contribute to the FAD site. S172 contributes to the substrate binding site. Residue 220–221 (SR) participates in substrate binding. At K239 the chain carries N6-acetyllysine. K260 is modified (N6-acetyllysine; alternate). N6-succinyllysine; alternate is present on K260. Substrate is bound by residues Y275 and 282–285 (DLER). Residue E284 is the Proton acceptor of the active site. Residue R310 coordinates FAD. K316 carries the N6-succinyllysine modification. FAD-binding positions include Q321 and 378–382 (QCLGG). Position 405-406 (405-406 (GG)) interacts with substrate. An FAD-binding site is contributed by 407-409 (TSE).

Belongs to the acyl-CoA dehydrogenase family. In terms of assembly, homotetramer. Requires FAD as cofactor.

The protein localises to the mitochondrion matrix. It carries out the reaction 3-methylbutanoyl-CoA + oxidized [electron-transfer flavoprotein] + H(+) = 3-methylbut-2-enoyl-CoA + reduced [electron-transfer flavoprotein]. It catalyses the reaction pentanoyl-CoA + oxidized [electron-transfer flavoprotein] + H(+) = (2E)-pentenoyl-CoA + reduced [electron-transfer flavoprotein]. The enzyme catalyses hexanoyl-CoA + oxidized [electron-transfer flavoprotein] + H(+) = (2E)-hexenoyl-CoA + reduced [electron-transfer flavoprotein]. The catalysed reaction is butanoyl-CoA + oxidized [electron-transfer flavoprotein] + H(+) = (2E)-butenoyl-CoA + reduced [electron-transfer flavoprotein]. The protein operates within amino-acid degradation; L-leucine degradation; (S)-3-hydroxy-3-methylglutaryl-CoA from 3-isovaleryl-CoA: step 1/3. Catalyzes the conversion of isovaleryl-CoA/3-methylbutanoyl-CoA to 3-methylbut-2-enoyl-CoA as an intermediate step in the leucine (Leu) catabolic pathway. To a lesser extent, is also able to catalyze the oxidation of other saturated short-chain acyl-CoA thioesters as pentanoyl-CoA, hexenoyl-CoA and butenoyl-CoA. This chain is Isovaleryl-CoA dehydrogenase, mitochondrial (Ivd), found in Rattus norvegicus (Rat).